Reading from the N-terminus, the 946-residue chain is Protein translocase subunit SecA (946 aa).

Residues glutamine 87, 105–109, and aspartate 524 contribute to the ATP site; that span reads GEGKT. The interval 904–933 is disordered; it reads PAQTTDKADRDPNKPETWGKVGRNEDCPCG. Cysteine 930, cysteine 932, cysteine 941, and histidine 942 together coordinate Zn(2+).

Belongs to the SecA family. In terms of assembly, monomer and homodimer. Part of the essential Sec protein translocation apparatus which comprises SecA, SecYEG and auxiliary proteins SecDF-YajC and YidC. Requires Zn(2+) as cofactor.

The protein localises to the cell inner membrane. Its subcellular location is the cytoplasm. It catalyses the reaction ATP + H2O + cellular proteinSide 1 = ADP + phosphate + cellular proteinSide 2.. Its function is as follows. Part of the Sec protein translocase complex. Interacts with the SecYEG preprotein conducting channel. Has a central role in coupling the hydrolysis of ATP to the transfer of proteins into and across the cell membrane, serving both as a receptor for the preprotein-SecB complex and as an ATP-driven molecular motor driving the stepwise translocation of polypeptide chains across the membrane. In Rhodopseudomonas palustris (strain TIE-1), this protein is Protein translocase subunit SecA.